The following is a 147-amino-acid chain: Large ribosomal subunit protein uL16 (147 aa).

Belongs to the universal ribosomal protein uL16 family. Part of the 50S ribosomal subunit.

Binds 23S rRNA and is also seen to make contacts with the A and possibly P site tRNAs. This Finegoldia magna (strain ATCC 29328 / DSM 20472 / WAL 2508) (Peptostreptococcus magnus) protein is Large ribosomal subunit protein uL16.